The primary structure comprises 354 residues: NADH-quinone oxidoreductase subunit H (354 aa).

8 consecutive transmembrane segments (helical) span residues 22-42 (ILIRAVIIVVPLLLCVAYLIL), 91-111 (YLIAPLMVLMPAVAVWAVIPF), 124-144 (LLYVMAISSVGVYGVILAGWA), 168-188 (MGFALVTVLMVAGSLNLSAIV), 203-223 (ILSWNWLPLLPMFGVYFISGV), 255-275 (LFFLAEYINMIIISTMTALMF), 291-311 (IPGFFWLVIKVFLLLSVFIWI), and 326-346 (LGWKVFIPLTVAWLIIVAIWI).

It belongs to the complex I subunit 1 family. In terms of assembly, NDH-1 is composed of 14 different subunits. Subunits NuoA, H, J, K, L, M, N constitute the membrane sector of the complex.

It is found in the cell inner membrane. It catalyses the reaction a quinone + NADH + 5 H(+)(in) = a quinol + NAD(+) + 4 H(+)(out). NDH-1 shuttles electrons from NADH, via FMN and iron-sulfur (Fe-S) centers, to quinones in the respiratory chain. The immediate electron acceptor for the enzyme in this species is believed to be ubiquinone. Couples the redox reaction to proton translocation (for every two electrons transferred, four hydrogen ions are translocated across the cytoplasmic membrane), and thus conserves the redox energy in a proton gradient. This subunit may bind ubiquinone. This Cupriavidus necator (strain ATCC 17699 / DSM 428 / KCTC 22496 / NCIMB 10442 / H16 / Stanier 337) (Ralstonia eutropha) protein is NADH-quinone oxidoreductase subunit H.